The following is a 228-amino-acid chain: Thymidylate kinase (228 aa).

20–27 is an ATP binding site; it reads GGEGSGKS.

This sequence belongs to the thymidylate kinase family.

It catalyses the reaction dTMP + ATP = dTDP + ADP. In terms of biological role, phosphorylation of dTMP to form dTDP in both de novo and salvage pathways of dTTP synthesis. This chain is Thymidylate kinase, found in Afipia carboxidovorans (strain ATCC 49405 / DSM 1227 / KCTC 32145 / OM5) (Oligotropha carboxidovorans).